The following is a 417-amino-acid chain: Fatty-acid peroxygenase (417 aa).

Residue Cys363 participates in heme binding.

Belongs to the cytochrome P450 family. It depends on heme as a cofactor.

It catalyses the reaction a 1,2-saturated fatty acid + H2O2 = a 2-hydroxy fatty acid + H2O. The catalysed reaction is a 2,3-saturated fatty acid + H2O2 = a 3-hydroxy fatty acid + H2O. The enzyme catalyses tetradecanoate + H2O2 = (3R)-hydroxytetradecanoate + H2O. It carries out the reaction tetradecanoate + H2O2 = (2R)-hydroxytetradecanoate + H2O. It catalyses the reaction tetradecanoate + H2O2 = (2S)-hydroxytetradecanoate + H2O. Functionally, catalyzes the alpha- and beta-hydroxylation of myristic acid in the presence of hydrogen peroxide. This is Fatty-acid peroxygenase (cypC) from Bacillus subtilis (strain 168).